We begin with the raw amino-acid sequence, 207 residues long: Cytochrome c biogenesis ATP-binding export protein CcmA (207 aa).

The 204-residue stretch at 4 to 207 (LEARELLCER…RISLTQTGAA (204 aa)) folds into the ABC transporter domain. 36 to 43 (GSNGAGKT) is a binding site for ATP.

The protein belongs to the ABC transporter superfamily. CcmA exporter (TC 3.A.1.107) family. The complex is composed of two ATP-binding proteins (CcmA) and two transmembrane proteins (CcmB).

The protein resides in the cell inner membrane. The catalysed reaction is heme b(in) + ATP + H2O = heme b(out) + ADP + phosphate + H(+). Its function is as follows. Part of the ABC transporter complex CcmAB involved in the biogenesis of c-type cytochromes; once thought to export heme, this seems not to be the case, but its exact role is uncertain. Responsible for energy coupling to the transport system. The sequence is that of Cytochrome c biogenesis ATP-binding export protein CcmA from Escherichia coli O6:H1 (strain CFT073 / ATCC 700928 / UPEC).